A 225-amino-acid chain; its full sequence is Ribose-5-phosphate isomerase A (225 aa).

Substrate contacts are provided by residues 26-29 (TGST), 82-85 (DGAD), and 95-98 (KGGG). Catalysis depends on Glu104, which acts as the Proton acceptor. Lys122 provides a ligand contact to substrate.

This sequence belongs to the ribose 5-phosphate isomerase family. Homodimer.

The catalysed reaction is aldehydo-D-ribose 5-phosphate = D-ribulose 5-phosphate. Its pathway is carbohydrate degradation; pentose phosphate pathway; D-ribose 5-phosphate from D-ribulose 5-phosphate (non-oxidative stage): step 1/1. Its function is as follows. Catalyzes the reversible conversion of ribose-5-phosphate to ribulose 5-phosphate. The chain is Ribose-5-phosphate isomerase A from Streptococcus gordonii (strain Challis / ATCC 35105 / BCRC 15272 / CH1 / DL1 / V288).